We begin with the raw amino-acid sequence, 317 residues long: Melanocyte-stimulating hormone receptor (317 aa).

Residues 1-37 (MPALGSPRRLLGSLNCTPPATLPLTLAPNRTGPQCLE) are Extracellular-facing. Asn-29 carries N-linked (GlcNAc...) asparagine glycosylation. Residues 38–63 (VSIPDGLFLSLGLVSLVENVLVVAAI) form a helical membrane-spanning segment. Residues 64-72 (AKNRNLHSP) are Cytoplasmic-facing. The chain crosses the membrane as a helical span at residues 73 to 93 (MYYFICCLAMSDLLVSVSNVL). Residues 94–118 (ETAVMLLLEAGVLATRAAVVQQLDN) lie on the Extracellular side of the membrane. A helical membrane pass occupies residues 119–140 (VIDVLICSSMVSSLCFLGAIAV). Over 141-163 (DRYISIFYALRYHSVVTLPRAWR) the chain is Cytoplasmic. Residues 164 to 183 (IIAAIWVASILTSVLSITYY) form a helical membrane-spanning segment. The Extracellular segment spans residues 184 to 191 (NHTVVLLC). Residues 192–211 (LVGFFIAMLALMAVLYVHML) form a helical membrane-spanning segment. The Cytoplasmic portion of the chain corresponds to 212 to 240 (ARACQHARGIARLQKRQRPIHQGFGLKGA). Residues 241–266 (ATLTILLGVFFLCWGPFFLHLSLIVL) form a helical membrane-spanning segment. At 267–279 (CPQHPTCGCIFKN) the chain is on the extracellular side. The chain crosses the membrane as a helical span at residues 280 to 300 (FNLFLALIICNAIVDPLIYAF). The Cytoplasmic portion of the chain corresponds to 301-317 (RSQELRKTLQEVLQCSW). Cys-315 carries S-palmitoyl cysteine lipidation.

The protein belongs to the G-protein coupled receptor 1 family. Interacts with MGRN1, but does not undergo MGRN1-mediated ubiquitination; this interaction competes with GNAS-binding and thus inhibits agonist-induced cAMP production. Interacts with OPN3; the interaction results in a decrease in MC1R-mediated cAMP signaling and ultimately a decrease in melanin production in melanocytes.

It localises to the cell membrane. Functionally, receptor for MSH (alpha, beta and gamma) and ACTH. The activity of this receptor is mediated by G proteins which activate adenylate cyclase. Mediates melanogenesis, the production of eumelanin (black/brown) and phaeomelanin (red/yellow), via regulation of cAMP signaling in melanocytes. This chain is Melanocyte-stimulating hormone receptor (MC1R), found in Capra hircus (Goat).